The primary structure comprises 389 residues: MSWWWAGAIGAAKKRLEEDDAQPKHSSVALIVGVTGIIGNSLAEILPLADTPGGPWKVYGVARRTRPAWHEDNPINYVQCDISDPDDSQAKLSPLTDVTHVFYVTWANRSTEQENCEANSKMFRNVLDAVIPNCPNLKHISLQTGRKHYMGPFESYGKIESHDPPYTEDLPRLKYMNFYYDLEDIMLEEVEKKEGLTWSVHRPGNIFGFSPYSMMNLVGTLCVYAAICKHEGKVLRFTGCKAAWDGYSDCSDADLIAEHHIWAAVDPYAKNEAFNVSNGDVFKWKHFWKVLAEQFGVGCGEYEEGVDLKLQDLMKGKEPVWEEIVRENGLTPTKLKDVGIWWFGDVILGNECFLDSMNKSKEHGFLGFRNSKNAFISWIDKAKAYKIVP.

NADP(+) contacts are provided by residues 35–37, 63–64, 81–82, threonine 105, and glutamine 143; these read TGI, RR, and DI. Catalysis depends on residues lysine 147 and tyrosine 179. Residues tyrosine 179, isoleucine 206, and 213–215 contribute to the NADP(+) site; that span reads SMM.

The protein belongs to the short-chain dehydrogenases/reductases (SDR) family. Highly divergent. Homodimer.

It carries out the reaction 5beta-cholestan-3-one + NADP(+) = cholest-4-en-3-one + NADPH + H(+). It catalyses the reaction 4,5beta-dihydrocortisone + NADP(+) = cortisone + NADPH + H(+). Involved in cardenolide biosynthesis. Catalyzes the stereospecific conversion of progesterone to 5-beta-pregnane-3,20-dione. Can use progesterone, testosterone, 4-androstene-3,17-dione, cortisol and cortisone as substrates, but not pregnenolone, 21-OH-pregnenolone or isoprogesterone. NADPH could not be replaced by NADH. This Digitalis lanata (Grecian foxglove) protein is 3-oxo-Delta(4,5)-steroid 5-beta-reductase.